The chain runs to 429 residues: Ribosomal RNA small subunit methyltransferase B (429 aa).

S-adenosyl-L-methionine-binding positions include 254 to 260, D277, D303, and D322; that span reads CAAPGGK. The active-site Nucleophile is C375.

This sequence belongs to the class I-like SAM-binding methyltransferase superfamily. RsmB/NOP family.

It localises to the cytoplasm. The catalysed reaction is cytidine(967) in 16S rRNA + S-adenosyl-L-methionine = 5-methylcytidine(967) in 16S rRNA + S-adenosyl-L-homocysteine + H(+). Functionally, specifically methylates the cytosine at position 967 (m5C967) of 16S rRNA. The protein is Ribosomal RNA small subunit methyltransferase B of Shigella boydii serotype 4 (strain Sb227).